A 174-amino-acid chain; its full sequence is uncharacterized protein (174 aa).

The segment at 137-174 (TNVTLGDDTPKSYDAPVSAIPPPATATTANATGVKPLE) is disordered.

This is an uncharacterized protein from Acanthamoeba polyphaga (Amoeba).